The following is a 160-amino-acid chain: Transcription elongation factor GreA (160 aa).

Positions 49-75 (SEYDEAKNDQAFTEGKILQLENKLKNA) form a coiled coil.

The protein belongs to the GreA/GreB family.

Its function is as follows. Necessary for efficient RNA polymerase transcription elongation past template-encoded arresting sites. The arresting sites in DNA have the property of trapping a certain fraction of elongating RNA polymerases that pass through, resulting in locked ternary complexes. Cleavage of the nascent transcript by cleavage factors such as GreA or GreB allows the resumption of elongation from the new 3'terminus. GreA releases sequences of 2 to 3 nucleotides. This is Transcription elongation factor GreA from Clostridium botulinum (strain Eklund 17B / Type B).